The primary structure comprises 498 residues: Glycerol kinase (498 aa).

Thr-12 contributes to the ADP binding site. ATP-binding residues include Thr-12, Thr-13, and Ser-14. Position 12 (Thr-12) interacts with sn-glycerol 3-phosphate. Position 16 (Arg-16) interacts with ADP. Arg-82, Glu-83, and Tyr-134 together coordinate sn-glycerol 3-phosphate. Arg-82, Glu-83, and Tyr-134 together coordinate glycerol. His-230 is subject to Phosphohistidine; by HPr. Asp-244 contributes to the sn-glycerol 3-phosphate binding site. Glycerol contacts are provided by Asp-244 and Gln-245. Residues Thr-266 and Gly-309 each contribute to the ADP site. ATP contacts are provided by Thr-266, Gly-309, Gln-313, and Gly-410. Residues Gly-410 and Asn-414 each contribute to the ADP site.

The protein belongs to the FGGY kinase family. Homotetramer and homodimer (in equilibrium). The phosphoenolpyruvate-dependent sugar phosphotransferase system (PTS), including enzyme I, and histidine-containing protein (HPr) are required for the phosphorylation, which leads to the activation of the enzyme.

It carries out the reaction glycerol + ATP = sn-glycerol 3-phosphate + ADP + H(+). The protein operates within polyol metabolism; glycerol degradation via glycerol kinase pathway; sn-glycerol 3-phosphate from glycerol: step 1/1. Activated by phosphorylation and inhibited by fructose 1,6-bisphosphate (FBP). Functionally, key enzyme in the regulation of glycerol uptake and metabolism. Catalyzes the phosphorylation of glycerol to yield sn-glycerol 3-phosphate. In Staphylococcus aureus (strain Mu50 / ATCC 700699), this protein is Glycerol kinase.